The primary structure comprises 72 residues: Lantibiotic Flvbeta.e (72 aa).

Residues 1–34 constitute a propeptide, cleaved by FlvT; it reads MNNKEFNMEQFKKLAAVVSEDELDEMLDENVTGA. The segment at residues 36–40 is a cross-link (lanthionine (Ser-Cys); by FlvM2); the sequence is SSIPC. A 2,3-didehydroalanine (Ser); by FlvM2 modification is found at S37. Residues T48 and T49 each carry the 2,3-didehydrobutyrine; by FlvM2 modification. 3 consecutive cross-links (beta-methyllanthionine (Thr-Cys); by FlvM2) follow at residues 55–61, 63–66, and 67–70; these read TTGFDWC, TGAC, and TTSC.

Post-translationally, contains LL-lanthionine and DL-beta-methyllanthionine, when coepressed in E.coli with the flavecin synthetase FlvM2.

It localises to the secreted. In terms of biological role, lanthionine-containing peptide antibiotic (lantibiotic) that is probably active on Gram-positive bacteria, since its analog [Del1]Flvbeta.e shows antibacterial activity against Gram-positive bacteria. This activity is not synergistically enhanced by [Del2]Flvalpha.a, an analog of Flvalpha.a, which is encoded by the same operon than Flvbeta.e. The bactericidal activity of lantibiotics is based on depolarization of energized bacterial cytoplasmic membranes, initiated by the formation of aqueous transmembrane pores. The polypeptide is Lantibiotic Flvbeta.e (Ruminococcus flavefaciens).